The chain runs to 813 residues: Nuclear pore complex protein 5 (813 aa).

Belongs to the nucleoporin Nup84/Nup107 family. As to quaternary structure, part of the nuclear pore complex (NPC). May interact with mdf-1.

It is found in the nucleus. It localises to the nuclear pore complex. The protein resides in the chromosome. Its subcellular location is the centromere. The protein localises to the kinetochore. It is found in the nucleus membrane. Involved in kinetochore assembly and chromosome segregation during embryonic mitosis. Required for the localization of the NDC80 complex member him-10, the chromosomal passenger complex component air-2 and nuclear pore complex proteins npp-23 and npp-15 to kinetochores during metaphase. Required for npp-23 localization to the nuclear envelope during interphase. Recruits mdf-1, a component of the spindle assembly checkpoint, to the nuclear envelope. Appears dispensable for the assembly of the nuclear pore complex and for nuclear protein import. The protein is Nuclear pore complex protein 5 of Caenorhabditis elegans.